The chain runs to 227 residues: Orotidine 5'-phosphate decarboxylase (227 aa).

Substrate is bound by residues D8, K30, 59-68 (DLKLYDIPYT), T118, R178, Q187, G207, and R208. Residue K61 is the Proton donor of the active site.

The protein belongs to the OMP decarboxylase family. Type 1 subfamily. Homodimer.

The catalysed reaction is orotidine 5'-phosphate + H(+) = UMP + CO2. It participates in pyrimidine metabolism; UMP biosynthesis via de novo pathway; UMP from orotate: step 2/2. Catalyzes the decarboxylation of orotidine 5'-monophosphate (OMP) to uridine 5'-monophosphate (UMP). The sequence is that of Orotidine 5'-phosphate decarboxylase from Helicobacter pylori (strain J99 / ATCC 700824) (Campylobacter pylori J99).